The sequence spans 481 residues: Glutamyl-tRNA(Gln) amidotransferase subunit A (481 aa).

Residues lysine 76 and serine 151 each act as charge relay system in the active site. The active-site Acyl-ester intermediate is serine 175.

Belongs to the amidase family. GatA subfamily. In terms of assembly, heterotrimer of A, B and C subunits.

It carries out the reaction L-glutamyl-tRNA(Gln) + L-glutamine + ATP + H2O = L-glutaminyl-tRNA(Gln) + L-glutamate + ADP + phosphate + H(+). Functionally, allows the formation of correctly charged Gln-tRNA(Gln) through the transamidation of misacylated Glu-tRNA(Gln) in organisms which lack glutaminyl-tRNA synthetase. The reaction takes place in the presence of glutamine and ATP through an activated gamma-phospho-Glu-tRNA(Gln). In Neisseria gonorrhoeae (strain ATCC 700825 / FA 1090), this protein is Glutamyl-tRNA(Gln) amidotransferase subunit A.